A 157-amino-acid polypeptide reads, in one-letter code: uncharacterized protein (157 aa).

The 146-residue stretch at 9 to 154 (LLINYKTLDE…ETNLNAVTNE (146 aa)) folds into the N-acetyltransferase domain.

This is an uncharacterized protein from Bacillus cereus (strain ATCC 14579 / DSM 31 / CCUG 7414 / JCM 2152 / NBRC 15305 / NCIMB 9373 / NCTC 2599 / NRRL B-3711).